We begin with the raw amino-acid sequence, 308 residues long: Ribonuclease Z (308 aa).

7 residues coordinate Zn(2+): H63, H65, D67, H68, H140, D211, and H269. The Proton acceptor role is filled by D67.

It belongs to the RNase Z family. As to quaternary structure, homodimer. The cofactor is Zn(2+).

It carries out the reaction Endonucleolytic cleavage of RNA, removing extra 3' nucleotides from tRNA precursor, generating 3' termini of tRNAs. A 3'-hydroxy group is left at the tRNA terminus and a 5'-phosphoryl group is left at the trailer molecule.. Its function is as follows. Zinc phosphodiesterase, which displays some tRNA 3'-processing endonuclease activity. Probably involved in tRNA maturation, by removing a 3'-trailer from precursor tRNA. The polypeptide is Ribonuclease Z (Bacillus velezensis (strain DSM 23117 / BGSC 10A6 / LMG 26770 / FZB42) (Bacillus amyloliquefaciens subsp. plantarum)).